The primary structure comprises 255 residues: Glutamate racemase (255 aa).

Substrate contacts are provided by residues 7–8 (DS) and 39–40 (YG). Cysteine 70 serves as the catalytic Proton donor/acceptor. Residue 71–72 (NT) coordinates substrate. The active-site Proton donor/acceptor is the cysteine 181. 182–183 (TH) provides a ligand contact to substrate.

Belongs to the aspartate/glutamate racemases family.

It catalyses the reaction L-glutamate = D-glutamate. It participates in cell wall biogenesis; peptidoglycan biosynthesis. In terms of biological role, provides the (R)-glutamate required for cell wall biosynthesis. In Helicobacter acinonychis (strain Sheeba), this protein is Glutamate racemase.